The sequence spans 467 residues: UDP-N-acetylmuramate--L-alanine ligase (467 aa).

114–120 (GTHGKTT) lines the ATP pocket.

Belongs to the MurCDEF family.

It localises to the cytoplasm. It carries out the reaction UDP-N-acetyl-alpha-D-muramate + L-alanine + ATP = UDP-N-acetyl-alpha-D-muramoyl-L-alanine + ADP + phosphate + H(+). Its pathway is cell wall biogenesis; peptidoglycan biosynthesis. Functionally, cell wall formation. The polypeptide is UDP-N-acetylmuramate--L-alanine ligase (Nitrobacter hamburgensis (strain DSM 10229 / NCIMB 13809 / X14)).